A 175-amino-acid polypeptide reads, in one-letter code: CDP-archaeol synthase (175 aa).

4 consecutive transmembrane segments (helical) span residues 41 to 61, 82 to 102, 122 to 142, and 150 to 170; these read GLFS…WLSS, LIVV…KSFF, FVVG…VSNF, and VIII…LIGV.

This sequence belongs to the CDP-archaeol synthase family. Requires Mg(2+) as cofactor.

It localises to the cell membrane. The enzyme catalyses 2,3-bis-O-(geranylgeranyl)-sn-glycerol 1-phosphate + CTP + H(+) = CDP-2,3-bis-O-(geranylgeranyl)-sn-glycerol + diphosphate. It functions in the pathway membrane lipid metabolism; glycerophospholipid metabolism. In terms of biological role, catalyzes the formation of CDP-2,3-bis-(O-geranylgeranyl)-sn-glycerol (CDP-archaeol) from 2,3-bis-(O-geranylgeranyl)-sn-glycerol 1-phosphate (DGGGP) and CTP. This reaction is the third ether-bond-formation step in the biosynthesis of archaeal membrane lipids. The polypeptide is CDP-archaeol synthase (Methanosarcina barkeri (strain Fusaro / DSM 804)).